The chain runs to 429 residues: Glutamate-1-semialdehyde 2,1-aminomutase (429 aa).

Lys-265 is modified (N6-(pyridoxal phosphate)lysine).

This sequence belongs to the class-III pyridoxal-phosphate-dependent aminotransferase family. HemL subfamily. As to quaternary structure, homodimer. Pyridoxal 5'-phosphate is required as a cofactor.

It is found in the cytoplasm. The catalysed reaction is (S)-4-amino-5-oxopentanoate = 5-aminolevulinate. The protein operates within porphyrin-containing compound metabolism; protoporphyrin-IX biosynthesis; 5-aminolevulinate from L-glutamyl-tRNA(Glu): step 2/2. This chain is Glutamate-1-semialdehyde 2,1-aminomutase, found in Shewanella halifaxensis (strain HAW-EB4).